A 196-amino-acid chain; its full sequence is Transmembrane protein 126A (196 aa).

The Mitochondrial matrix portion of the chain corresponds to Met1 to Glu34. The helical transmembrane segment at Tyr35–Phe55 threads the bilayer. Topologically, residues Arg56–Arg57 are mitochondrial intermembrane. The chain crosses the membrane as a helical span at residues Ile58–Leu78. Topologically, residues Thr79–Arg106 are mitochondrial matrix. The chain crosses the membrane as a helical span at residues Gly107 to Asn127. Residues Gly128 to Lys159 lie on the Mitochondrial intermembrane side of the membrane. A helical membrane pass occupies residues Met160–Ser176. Residues Arg177 to Gln196 are Mitochondrial matrix-facing.

It belongs to the TMEM126 family. As to quaternary structure, interacts with OXA1L; promoting cotranslational quality control in mitochondria.

The protein localises to the mitochondrion inner membrane. Its function is as follows. Protein required for the cotranslational protein quality control in the inner membrane of the mitochondria. Associates with newly synthesized polypeptides and may act as a chaperone that cooperates with OXA1L for the insertion of newly synthesized mitochondrial proteins into the inner membrane. Required for the assembly of the ND4 module of mitochondrial complex I. The chain is Transmembrane protein 126A (Tmem126a) from Rattus norvegicus (Rat).